Here is a 318-residue protein sequence, read N- to C-terminus: Homoserine kinase (318 aa).

97–107 (PIGSGLGSSAC) contacts ATP.

The protein belongs to the GHMP kinase family. Homoserine kinase subfamily.

The protein localises to the cytoplasm. It carries out the reaction L-homoserine + ATP = O-phospho-L-homoserine + ADP + H(+). The protein operates within amino-acid biosynthesis; L-threonine biosynthesis; L-threonine from L-aspartate: step 4/5. Its function is as follows. Catalyzes the ATP-dependent phosphorylation of L-homoserine to L-homoserine phosphate. This chain is Homoserine kinase, found in Vibrio cholerae serotype O1 (strain M66-2).